The following is a 72-amino-acid chain: Keratin-associated protein 19-5 (72 aa).

Belongs to the KRTAP type 19 family. In terms of assembly, interacts with hair keratins.

In terms of biological role, in the hair cortex, hair keratin intermediate filaments are embedded in an interfilamentous matrix, consisting of hair keratin-associated proteins (KRTAP), which are essential for the formation of a rigid and resistant hair shaft through their extensive disulfide bond cross-linking with abundant cysteine residues of hair keratins. The matrix proteins include the high-sulfur and high-glycine-tyrosine keratins. In Homo sapiens (Human), this protein is Keratin-associated protein 19-5 (KRTAP19-5).